A 47-amino-acid polypeptide reads, in one-letter code: Photosystem II reaction center protein K (47 aa).

A propeptide spanning residues 1–10 (MALINFDLLA) is cleaved from the precursor. The helical transmembrane segment at 26–46 (LPLIPLFFFLLVFVWQAAVGF) threads the bilayer.

Belongs to the PsbK family. As to quaternary structure, PSII is composed of 1 copy each of membrane proteins PsbA, PsbB, PsbC, PsbD, PsbE, PsbF, PsbH, PsbI, PsbJ, PsbK, PsbL, PsbM, PsbT, PsbX, PsbY, Psb30/Ycf12, peripheral proteins PsbO, CyanoQ (PsbQ), PsbU, PsbV and a large number of cofactors. It forms dimeric complexes.

It is found in the cellular thylakoid membrane. In terms of biological role, one of the components of the core complex of photosystem II (PSII). PSII is a light-driven water:plastoquinone oxidoreductase that uses light energy to abstract electrons from H(2)O, generating O(2) and a proton gradient subsequently used for ATP formation. It consists of a core antenna complex that captures photons, and an electron transfer chain that converts photonic excitation into a charge separation. In Prochlorococcus marinus (strain NATL1A), this protein is Photosystem II reaction center protein K.